We begin with the raw amino-acid sequence, 146 residues long: Ribosome-binding factor A (146 aa).

Residues Ile-113–Glu-146 form a disordered region.

Belongs to the RbfA family. As to quaternary structure, monomer. Binds 30S ribosomal subunits, but not 50S ribosomal subunits or 70S ribosomes.

It localises to the cytoplasm. One of several proteins that assist in the late maturation steps of the functional core of the 30S ribosomal subunit. Associates with free 30S ribosomal subunits (but not with 30S subunits that are part of 70S ribosomes or polysomes). Required for efficient processing of 16S rRNA. May interact with the 5'-terminal helix region of 16S rRNA. The sequence is that of Ribosome-binding factor A from Gemmatimonas aurantiaca (strain DSM 14586 / JCM 11422 / NBRC 100505 / T-27).